The primary structure comprises 105 residues: NADH-quinone oxidoreductase subunit K (105 aa).

The next 3 membrane-spanning stretches (helical) occupy residues 4-24 (LTHY…GVIV), 28-48 (IIVI…SLVA), and 66-86 (LSIF…ALIV).

This sequence belongs to the complex I subunit 4L family. As to quaternary structure, NDH-1 is composed of 14 different subunits. Subunits NuoA, H, J, K, L, M, N constitute the membrane sector of the complex.

The protein localises to the cell inner membrane. It catalyses the reaction a quinone + NADH + 5 H(+)(in) = a quinol + NAD(+) + 4 H(+)(out). NDH-1 shuttles electrons from NADH, via FMN and iron-sulfur (Fe-S) centers, to quinones in the respiratory chain. The immediate electron acceptor for the enzyme in this species is believed to be ubiquinone. Couples the redox reaction to proton translocation (for every two electrons transferred, four hydrogen ions are translocated across the cytoplasmic membrane), and thus conserves the redox energy in a proton gradient. In Akkermansia muciniphila (strain ATCC BAA-835 / DSM 22959 / JCM 33894 / BCRC 81048 / CCUG 64013 / CIP 107961 / Muc), this protein is NADH-quinone oxidoreductase subunit K.